Here is a 1209-residue protein sequence, read N- to C-terminus: Calcium-activated potassium channel subunit alpha-1 (1209 aa).

Residues 1 to 26 (MANGGGGGGGGSSGSSGGGGGGGGGE) show a composition bias toward gly residues. Disordered regions lie at residues 1–29 (MANGGGGGGGGSSGSSGGGGGGGGGETAL) and 42–64 (LDASSSSSSSSSSSSSSSSSVHE). At 1 to 87 (MANGGGGGGG…VPCDSRGQRM (87 aa)) the chain is on the extracellular side. Positions 45 to 61 (SSSSSSSSSSSSSSSSS) are enriched in low complexity. The chain crosses the membrane as a helical span at residues 88 to 108 (WWAFLASSMVTFFGGLFIILL). Topologically, residues 109–179 (WRTLKYLWTV…MISAQTLTGR (71 aa)) are cytoplasmic. Residues Cys119, Cys120, and Cys122 are each lipidated (S-palmitoyl cysteine). A helical membrane pass occupies residues 180–200 (VLVVLVFALSIGALVIYFIDS). Residues 201–215 (SNPIESCQNFYKDFT) are Extracellular-facing. Residues 216–236 (LQIDMAFNVFFLLYFGLRFIA) traverse the membrane as a helical segment. Residues 237 to 240 (ANDK) are Cytoplasmic-facing. A helical membrane pass occupies residues 241–261 (LWFWLEVNSVVDFFTVPPVFV). Residues 262 to 265 (SVYL) are Extracellular-facing. The chain crosses the membrane as a helical; Voltage-sensor span at residues 266-286 (NRSWLGLRFLRALRLIQFSEI). The Cytoplasmic segment spans residues 287 to 301 (LQFLNILKTSNSIKL). The chain crosses the membrane as a helical span at residues 302–322 (VNLLSIFISTWLTAAGFIHLV). At 323-336 (ENSGDPWENFQNNQ) the chain is on the extracellular side. The segment at residues 337 to 359 (ALTYWECVYLLMVTMSTVGYGDV) is an intramembrane region (pore-forming). Positions 353–356 (TVGY) match the Selectivity for potassium motif. The Extracellular segment spans residues 360-368 (YAKTTLGRL). The helical transmembrane segment at 369–389 (FMVFFILGGLAMFASYVPEII) threads the bilayer. Over 390–1209 (ELIGNRKKYG…DKQKKEMVYR (820 aa)) the chain is Cytoplasmic. The RCK N-terminal 1 domain occupies 408 to 550 (RKHIVVCGHI…WNWKEGDDAI (143 aa)). Mg(2+)-binding residues include Glu440, Gln463, and Glu465. The interval 557-577 (LGFIAQSCLAQGLSTMLANLF) is segment S7. Positions 614 to 634 (LSFPTVCELCFVKLKLLMIAI) are segment S8. Residues 682 to 686 (CKACH) are heme-binding motif. The segment at 704 to 734 (EDEQPPTLSPKKKQRNGGMRNSPNTSPKLMR) is disordered. Thr710 is subject to Phosphothreonine. Phosphoserine is present on residues Ser712, Ser725, and Ser729. Residues 784-804 (VLSGHVVVCIFGDVSSALIGL) form a segment S9 region. The 145-residue stretch at 786–930 (SGHVVVCIFG…MDRSSPDNSP (145 aa)) folds into the RCK N-terminal 2 domain. Thr917 carries the phosphothreonine modification. A phosphoserine mark is found at Ser925 and Ser929. The Calcium bowl motif lies at 977 to 999 (TELVNDTNVQFLDQDDDDDPDTE). Positions 986, 989, 992, and 994 each coordinate Ca(2+). The segment S10 stretch occupies residues 1006-1026 (FACGTAFAVSVLDSLMSATYF). The span at 1160–1185 (RASLSHSSHSSQSSSKKSSSVHSIPS) shows a compositional bias: low complexity. Residues 1160 to 1209 (RASLSHSSHSSQSSSKKSSSVHSIPSTANRPNRPKSRESRDKQKKEMVYR) are disordered. The span at 1194–1209 (KSRESRDKQKKEMVYR) shows a compositional bias: basic and acidic residues. Ser1195 and Ser1198 each carry phosphoserine.

Belongs to the potassium channel family. Calcium-activated (TC 1.A.1.3) subfamily. KCa1.1/KCNMA1 sub-subfamily. Homotetramer; which constitutes the calcium-activated potassium channel. Interacts with beta subunits KCNMB1, KCNMB2, KCNMB3 and KCNMB4. Interacts with gamma subunits LRRC26, LRRC38, LRRC52 and LRRC55. Beta and gamma subunits are accessory, and modulate its activity. Interacts with RAB11B. Phosphorylated. Phosphorylation by kinases such as PKA and/or PKG. In smooth muscles, phosphorylation affects its activity. Post-translationally, palmitoylation by ZDHHC22 and ZDHHC23 within the intracellular linker between the S0 and S1 transmembrane domains regulates localization to the plasma membrane. Depalmitoylated by LYPLA1 and LYPLAL1, leading to retard exit from the trans-Golgi network.

Its subcellular location is the cell membrane. It localises to the endoplasmic reticulum membrane. The catalysed reaction is K(+)(in) = K(+)(out). With respect to regulation, ethanol and carbon monoxide-bound heme increase channel activation. Its activity is regulated as follows. Heme inhibits channel activation. Its function is as follows. Potassium channel activated by both membrane depolarization or increase in cytosolic Ca(2+) that mediates export of K(+). It is also activated by the concentration of cytosolic Mg(2+). Its activation dampens the excitatory events that elevate the cytosolic Ca(2+) concentration and/or depolarize the cell membrane. It therefore contributes to repolarization of the membrane potential. Plays a key role in controlling excitability in a number of systems, such as regulation of the contraction of smooth muscle, the tuning of hair cells in the cochlea, regulation of transmitter release, and innate immunity. In smooth muscles, its activation by high level of Ca(2+), caused by ryanodine receptors in the sarcoplasmic reticulum, regulates the membrane potential. In cochlea cells, its number and kinetic properties partly determine the characteristic frequency of each hair cell and thereby helps to establish a tonotopic map. Kinetics of KCNMA1 channels are determined by alternative splicing, phosphorylation status and its combination with modulating beta subunits. Highly sensitive to both iberiotoxin (IbTx) and charybdotoxin (CTX). In terms of biological role, potassium channel activated by both membrane depolarization or increase in cytosolic Ca(2+) that mediates export of K(+). The polypeptide is Calcium-activated potassium channel subunit alpha-1 (Kcnma1) (Rattus norvegicus (Rat)).